The chain runs to 559 residues: Arginine--tRNA ligase (559 aa).

Positions 116 to 126 (ANPNGPLHVGH) match the 'HIGH' region motif.

It belongs to the class-I aminoacyl-tRNA synthetase family.

Its subcellular location is the cytoplasm. It carries out the reaction tRNA(Arg) + L-arginine + ATP = L-arginyl-tRNA(Arg) + AMP + diphosphate. This is Arginine--tRNA ligase from Methanosphaerula palustris (strain ATCC BAA-1556 / DSM 19958 / E1-9c).